Here is a 337-residue protein sequence, read N- to C-terminus: Phosphatidylglycerophosphate phosphatase PTPMT1 (337 aa).

The interval 1 to 20 (MYIKELTETDEEKRERSVED) is disordered. Residues tyrosine 55 and aspartate 133 each coordinate substrate. Residues 73–220 (WWDRVAEFIL…VVEYYHVKVL (148 aa)) form the Tyrosine-protein phosphatase domain. Catalysis depends on cysteine 164, which acts as the Phosphocysteine intermediate. The short motif at 164-170 (CKAGRGR) is the Glucan phosphatase signature motif CXAGXGR element. 165-170 (KAGRGR) is a substrate binding site.

It belongs to the protein-tyrosine phosphatase family. Non-receptor class dual specificity subfamily. Expressed in stems, roots, flowers, mature seeds and leaves.

The enzyme catalyses O-phospho-L-seryl-[protein] + H2O = L-seryl-[protein] + phosphate. It catalyses the reaction O-phospho-L-threonyl-[protein] + H2O = L-threonyl-[protein] + phosphate. It carries out the reaction O-phospho-L-tyrosyl-[protein] + H2O = L-tyrosyl-[protein] + phosphate. The catalysed reaction is a 1,2-diacyl-sn-glycero-3-phospho-(1'-sn-glycero-3'-phosphate) + H2O = a 1,2-diacyl-sn-glycero-3-phospho-(1'-sn-glycerol) + phosphate. Its pathway is phospholipid metabolism; phosphatidylglycerol biosynthesis; phosphatidylglycerol from CDP-diacylglycerol: step 2/2. In terms of biological role, exhibits phosphatidylglycerophosphate phosphatase activity. Involved in root growth and columella cells organization. May possess protein phosphatase activity. The chain is Phosphatidylglycerophosphate phosphatase PTPMT1 from Arabidopsis thaliana (Mouse-ear cress).